A 79-amino-acid polypeptide reads, in one-letter code: Probable [Fe-S]-dependent transcriptional repressor (79 aa).

Residues cysteine 56, cysteine 61, cysteine 64, and cysteine 71 each contribute to the iron-sulfur cluster site.

This sequence belongs to the FeoC family.

Functionally, may function as a transcriptional regulator that controls feoABC expression. In Klebsiella pneumoniae subsp. pneumoniae (strain ATCC 700721 / MGH 78578), this protein is Probable [Fe-S]-dependent transcriptional repressor.